The sequence spans 383 residues: uncharacterized protein (383 aa).

Residues G58–I383 form the YcaO domain. The disordered stretch occupies residues A80–D100.

This is an uncharacterized protein from Methanothermobacter thermautotrophicus (strain ATCC 29096 / DSM 1053 / JCM 10044 / NBRC 100330 / Delta H) (Methanobacterium thermoautotrophicum).